The primary structure comprises 388 residues: uncharacterized protein (388 aa).

Residues Cys-18, Cys-24, Cys-27, and Cys-99 each contribute to the [4Fe-4S] cluster site. Positions 212, 262, and 313 each coordinate S-adenosyl-L-methionine. Cys-343 acts as the Nucleophile in catalysis.

The protein belongs to the class I-like SAM-binding methyltransferase superfamily. RNA M5U methyltransferase family.

This is an uncharacterized protein from Bdellovibrio bacteriovorus (strain ATCC 15356 / DSM 50701 / NCIMB 9529 / HD100).